The primary structure comprises 397 residues: Elongation factor Tu (397 aa).

A tr-type G domain is found at K10 to E206. A G1 region spans residues G19–T26. G19 to T26 contributes to the GTP binding site. T26 contributes to the Mg(2+) binding site. The G2 stretch occupies residues G62–Q66. Residues D83–G86 form a G3 region. GTP contacts are provided by residues D83–H87 and N138–D141. The interval N138–D141 is G4. Residues S176 to L178 form a G5 region.

This sequence belongs to the TRAFAC class translation factor GTPase superfamily. Classic translation factor GTPase family. EF-Tu/EF-1A subfamily. Monomer.

It is found in the cytoplasm. The catalysed reaction is GTP + H2O = GDP + phosphate + H(+). Functionally, GTP hydrolase that promotes the GTP-dependent binding of aminoacyl-tRNA to the A-site of ribosomes during protein biosynthesis. This Saccharopolyspora erythraea (strain ATCC 11635 / DSM 40517 / JCM 4748 / NBRC 13426 / NCIMB 8594 / NRRL 2338) protein is Elongation factor Tu.